Consider the following 71-residue polypeptide: DNA-directed RNA polymerase subunit epsilon (71 aa).

The protein belongs to the RNA polymerase subunit epsilon family. In terms of assembly, monomer. RNAP is composed of a core of 2 alpha, a beta and a beta' subunit. The core is associated with a delta subunit, and at least one of epsilon or omega. When a sigma factor is associated with the core the holoenzyme is formed, which can initiate transcription.

The enzyme catalyses RNA(n) + a ribonucleoside 5'-triphosphate = RNA(n+1) + diphosphate. A non-essential component of RNA polymerase (RNAP). Has a similar structure to bacteriophage T7 protein Gp2 (AC P03704), which is known to bind to RNAP in the DNA binding-cleft. Unlike Gp2 however, this protein does not inhibit transcription initiation. The chain is DNA-directed RNA polymerase subunit epsilon from Geobacillus stearothermophilus (strain DSM 13240 / CIP 106956 / 10).